The primary structure comprises 61 residues: Small ribosomal subunit protein uS14 (61 aa).

Cysteine 24, cysteine 27, cysteine 40, and cysteine 43 together coordinate Zn(2+).

It belongs to the universal ribosomal protein uS14 family. Zinc-binding uS14 subfamily. In terms of assembly, part of the 30S ribosomal subunit. Contacts proteins S3 and S10. It depends on Zn(2+) as a cofactor.

Its function is as follows. Binds 16S rRNA, required for the assembly of 30S particles and may also be responsible for determining the conformation of the 16S rRNA at the A site. In Leptospira biflexa serovar Patoc (strain Patoc 1 / Ames), this protein is Small ribosomal subunit protein uS14.